The following is a 200-amino-acid chain: Guanylate kinase (200 aa).

The Guanylate kinase-like domain maps to 6 to 184; it reads GLLIVLSGPS…AVDKLKSILL (179 aa). Position 13–20 (13–20) interacts with ATP; it reads GPSGAGKG.

The protein belongs to the guanylate kinase family.

The protein resides in the cytoplasm. The catalysed reaction is GMP + ATP = GDP + ADP. Its function is as follows. Essential for recycling GMP and indirectly, cGMP. The sequence is that of Guanylate kinase from Desulfitobacterium hafniense (strain Y51).